The sequence spans 130 residues: Large ribosomal subunit protein eL32 (130 aa).

Position 40 is a phosphoserine (Ser40).

It belongs to the eukaryotic ribosomal protein eL32 family. As to quaternary structure, component of the large ribosomal subunit (LSU). Mature yeast ribosomes consist of a small (40S) and a large (60S) subunit. The 40S small subunit contains 1 molecule of ribosomal RNA (18S rRNA) and 33 different proteins (encoded by 57 genes). The large 60S subunit contains 3 rRNA molecules (25S, 5.8S and 5S rRNA) and 46 different proteins (encoded by 81 genes).

The protein localises to the cytoplasm. Functionally, component of the ribosome, a large ribonucleoprotein complex responsible for the synthesis of proteins in the cell. The small ribosomal subunit (SSU) binds messenger RNAs (mRNAs) and translates the encoded message by selecting cognate aminoacyl-transfer RNA (tRNA) molecules. The large subunit (LSU) contains the ribosomal catalytic site termed the peptidyl transferase center (PTC), which catalyzes the formation of peptide bonds, thereby polymerizing the amino acids delivered by tRNAs into a polypeptide chain. The nascent polypeptides leave the ribosome through a tunnel in the LSU and interact with protein factors that function in enzymatic processing, targeting, and the membrane insertion of nascent chains at the exit of the ribosomal tunnel. The sequence is that of Large ribosomal subunit protein eL32 from Saccharomyces cerevisiae (strain ATCC 204508 / S288c) (Baker's yeast).